The primary structure comprises 170 residues: Acetyl-CoA decarbonylase/synthase complex subunit epsilon 2 (170 aa).

Belongs to the CdhB family. As to quaternary structure, heterotetramer of two alpha and two epsilon subunits. The ACDS complex is made up of alpha, epsilon, beta, gamma and delta subunits with a probable stoichiometry of (alpha(2)epsilon(2))(4)-beta(8)-(gamma(1)delta(1))(8).

It functions in the pathway one-carbon metabolism; methanogenesis from acetate. Part of a complex that catalyzes the reversible cleavage of acetyl-CoA, allowing growth on acetate as sole source of carbon and energy. The alpha-epsilon subcomponent functions as a carbon monoxide dehydrogenase. The precise role of the epsilon subunit is unclear; it may have a stabilizing role within the alpha(2)epsilon(2) component and/or be involved in electron transfer to FAD during a potential FAD-mediated CO oxidation. The sequence is that of Acetyl-CoA decarbonylase/synthase complex subunit epsilon 2 (cdhB2) from Methanosarcina acetivorans (strain ATCC 35395 / DSM 2834 / JCM 12185 / C2A).